The following is a 317-amino-acid chain: Glutaminase (317 aa).

Positions 67, 118, 162, 169, 193, 245, and 263 each coordinate substrate.

The protein belongs to the glutaminase family. In terms of assembly, homotetramer.

It catalyses the reaction L-glutamine + H2O = L-glutamate + NH4(+). This chain is Glutaminase, found in Brucella canis (strain ATCC 23365 / NCTC 10854 / RM-666).